The sequence spans 130 residues: Glycine cleavage system H protein (130 aa).

Positions Thr24 to Lys106 constitute a Lipoyl-binding domain. Lys65 carries the post-translational modification N6-lipoyllysine.

Belongs to the GcvH family. As to quaternary structure, the glycine cleavage system is composed of four proteins: P, T, L and H. (R)-lipoate serves as cofactor.

Functionally, the glycine cleavage system catalyzes the degradation of glycine. The H protein shuttles the methylamine group of glycine from the P protein to the T protein. In Saccharophagus degradans (strain 2-40 / ATCC 43961 / DSM 17024), this protein is Glycine cleavage system H protein.